Consider the following 387-residue polypeptide: S-adenosylmethionine synthase (387 aa).

Residue His-16 coordinates ATP. Mg(2+) is bound at residue Asp-18. Position 44 (Glu-44) interacts with K(+). Residues Glu-57 and Gln-100 each contribute to the L-methionine site. The tract at residues Gln-100–Arg-110 is flexible loop. ATP contacts are provided by residues Asp-167–Lys-169, Arg-232–Phe-233, Asp-241, Arg-247–Lys-248, Ala-264, and Lys-268. Asp-241 is an L-methionine binding site. An L-methionine-binding site is contributed by Lys-272.

It belongs to the AdoMet synthase family. In terms of assembly, homotetramer; dimer of dimers. Mg(2+) serves as cofactor. K(+) is required as a cofactor.

It is found in the cytoplasm. The enzyme catalyses L-methionine + ATP + H2O = S-adenosyl-L-methionine + phosphate + diphosphate. Its pathway is amino-acid biosynthesis; S-adenosyl-L-methionine biosynthesis; S-adenosyl-L-methionine from L-methionine: step 1/1. Functionally, catalyzes the formation of S-adenosylmethionine (AdoMet) from methionine and ATP. The overall synthetic reaction is composed of two sequential steps, AdoMet formation and the subsequent tripolyphosphate hydrolysis which occurs prior to release of AdoMet from the enzyme. The sequence is that of S-adenosylmethionine synthase from Cupriavidus metallidurans (strain ATCC 43123 / DSM 2839 / NBRC 102507 / CH34) (Ralstonia metallidurans).